We begin with the raw amino-acid sequence, 560 residues long: Protein NRT1/ PTR FAMILY 2.5 (560 aa).

The disordered stretch occupies residues 1 to 20 (MADSKSGDTEVAHRSSDPSE). Helical transmembrane passes span 34 to 54 (TLLG…VFLI), 77 to 97 (MLPV…PVIS), 101 to 121 (FISL…YLMP), 141 to 161 (ILYV…FTLA), 177 to 197 (FFNW…TAIV), 207 to 227 (LGFG…IAGV), 323 to 343 (AILR…PVAV), 372 to 392 (VIVL…IYPM), 404 to 424 (LQQV…SAVV), 441 to 461 (VLWL…HFPA), 480 to 500 (SLTS…IDVI), and 520 to 540 (YWVV…CSWF).

It belongs to the major facilitator superfamily. Proton-dependent oligopeptide transporter (POT/PTR) (TC 2.A.17) family. Expressed in the root epidermis or cortex.

It is found in the membrane. In terms of biological role, transporter involved in a passive nitrate efflux. The polypeptide is Protein NRT1/ PTR FAMILY 2.5 (NPF2.5) (Arabidopsis thaliana (Mouse-ear cress)).